Reading from the N-terminus, the 487-residue chain is MTELFIDGAWIAGSGPAFASRNPGTDAIAWQGDSASAADVDRAVASARRAFAGWSALDFEARCAIVKRFAALLTERKEAIATAIGRETGKPLWEARTEVAAMAAKVGISIQAYQERTGEKRQDMADGVAVLRHRPHGVVAVFGPYNFPGHLPNGHIVPALIAGNTVVFKPSELAPGVARATVEVWQEAGLPAGVLNLVQGEKDTGIALANHRQIDGLFFTGSSDTGTLLHKQFGGRPEIVLALEMGGNNPLVIGEVEDLDAAVHHTIQSAFLSAGQRCTCARRIFVPQGAFGERFLARFADVTSKIMADVFDADPQPFMGAVISARAAAKLVDAQSRLVEQGAKPIIEMTQRDPRLGFVNASIIDVTGVANLPDEEHFGPLAQIVRYATFDEAIERANDTAFGLSAGLLADDAHAWEHFRRTIRAGIVNWNRPTNGASSAAPFGGTGRSGNHRPSAYYAADYCAYPMASVESTQLTLPASLSPGLHF.

221-226 (GSSDTG) contacts NAD(+). Catalysis depends on residues Glu244 and Cys278.

Belongs to the aldehyde dehydrogenase family. AstD subfamily.

It catalyses the reaction N-succinyl-L-glutamate 5-semialdehyde + NAD(+) + H2O = N-succinyl-L-glutamate + NADH + 2 H(+). Its pathway is amino-acid degradation; L-arginine degradation via AST pathway; L-glutamate and succinate from L-arginine: step 4/5. Catalyzes the NAD-dependent reduction of succinylglutamate semialdehyde into succinylglutamate. This Burkholderia ambifaria (strain MC40-6) protein is N-succinylglutamate 5-semialdehyde dehydrogenase.